The following is an 819-amino-acid chain: DNA mismatch repair protein MutS (819 aa).

ATP is bound at residue 596–603 (GPNMSGKS).

It belongs to the DNA mismatch repair MutS family.

Functionally, this protein is involved in the repair of mismatches in DNA. It is possible that it carries out the mismatch recognition step. This protein has a weak ATPase activity. In Thermosipho melanesiensis (strain DSM 12029 / CIP 104789 / BI429), this protein is DNA mismatch repair protein MutS.